The primary structure comprises 207 residues: GTP cyclohydrolase 1 (207 aa).

Residues Cys94, His97, and Cys167 each contribute to the Zn(2+) site.

This sequence belongs to the GTP cyclohydrolase I family. Toroid-shaped homodecamer, composed of two pentamers of five dimers.

It catalyses the reaction GTP + H2O = 7,8-dihydroneopterin 3'-triphosphate + formate + H(+). Its pathway is cofactor biosynthesis; 7,8-dihydroneopterin triphosphate biosynthesis; 7,8-dihydroneopterin triphosphate from GTP: step 1/1. The polypeptide is GTP cyclohydrolase 1 (Thermobifida fusca (strain YX)).